Here is a 348-residue protein sequence, read N- to C-terminus: GMP reductase (348 aa).

108–131 (ADFQKTKDVMALSDELIFICIDIA) is a binding site for NADP(+). K(+)-binding residues include G181 and G183. The active-site Thioimidate intermediate is the C186. An NADP(+)-binding site is contributed by 216–239 (IIGDGGCACAGDVAKAFGGGADFV).

This sequence belongs to the IMPDH/GMPR family. GuaC type 1 subfamily. In terms of assembly, homotetramer.

It carries out the reaction IMP + NH4(+) + NADP(+) = GMP + NADPH + 2 H(+). Functionally, catalyzes the irreversible NADPH-dependent deamination of GMP to IMP. It functions in the conversion of nucleobase, nucleoside and nucleotide derivatives of G to A nucleotides, and in maintaining the intracellular balance of A and G nucleotides. The sequence is that of GMP reductase from Vibrio vulnificus (strain CMCP6).